We begin with the raw amino-acid sequence, 375 residues long: Putative F-box protein At1g12190 (375 aa).

One can recognise an F-box domain in the interval 1 to 46; sequence MACVKFPWELMEEILYRVPSLSLSRFKTVSKEWNTLLNDKTFIKKH.

The sequence is that of Putative F-box protein At1g12190 from Arabidopsis thaliana (Mouse-ear cress).